We begin with the raw amino-acid sequence, 498 residues long: Glycerol kinase (498 aa).

Thr-12 is a binding site for ADP. The ATP site is built by Thr-12, Thr-13, and Ser-14. Residue Thr-12 coordinates sn-glycerol 3-phosphate. Arg-16 contacts ADP. Sn-glycerol 3-phosphate contacts are provided by Arg-82, Glu-83, and Tyr-134. Residues Arg-82, Glu-83, and Tyr-134 each coordinate glycerol. His-230 carries the phosphohistidine; by HPr modification. Residue Asp-244 participates in sn-glycerol 3-phosphate binding. Positions 244 and 245 each coordinate glycerol. ADP contacts are provided by Thr-266 and Gly-309. Thr-266, Gly-309, Gln-313, and Gly-410 together coordinate ATP. Gly-410 and Asn-414 together coordinate ADP.

This sequence belongs to the FGGY kinase family. Homotetramer and homodimer (in equilibrium). The phosphoenolpyruvate-dependent sugar phosphotransferase system (PTS), including enzyme I, and histidine-containing protein (HPr) are required for the phosphorylation, which leads to the activation of the enzyme.

It carries out the reaction glycerol + ATP = sn-glycerol 3-phosphate + ADP + H(+). The protein operates within polyol metabolism; glycerol degradation via glycerol kinase pathway; sn-glycerol 3-phosphate from glycerol: step 1/1. Its activity is regulated as follows. Activated by phosphorylation and inhibited by fructose 1,6-bisphosphate (FBP). Key enzyme in the regulation of glycerol uptake and metabolism. Catalyzes the phosphorylation of glycerol to yield sn-glycerol 3-phosphate. The protein is Glycerol kinase of Staphylococcus aureus (strain bovine RF122 / ET3-1).